A 357-amino-acid polypeptide reads, in one-letter code: MADEQALRQGWTTGACATAAAKAACCALLGDGFPDPVGIDLPGGRTPAFALALAEMGEGWARAGIVKDAGDDPDVTHGATIIATLRHGIAGAGLVFRAGRGVGIVTRPGLPLAVGEPAINPVPRRLMAEAVAAIAARHGMACDLEIEISVPGGEDIALRTWNPRLGILGGISILGTTGVVIPYSCSAWIHSIQRGIDVARACGLIHVAGCVGSTSEKAVRKVRGLGEEAIIDMGDFAGGMLKYLRRHPIPRVTIAGGFAKMCKLAAGQMDLHSSRSQVDMVWLAAQLRSLGADAALVAASAQANTALEVLELAEGFPLGQAIARQARAAAREVLDNPEVSLDVLVVDRQGRVIGDAH.

The protein belongs to the CbiD family.

The enzyme catalyses Co-precorrin-5B + S-adenosyl-L-methionine = Co-precorrin-6A + S-adenosyl-L-homocysteine. It participates in cofactor biosynthesis; adenosylcobalamin biosynthesis; cob(II)yrinate a,c-diamide from sirohydrochlorin (anaerobic route): step 6/10. In terms of biological role, catalyzes the methylation of C-1 in cobalt-precorrin-5B to form cobalt-precorrin-6A. The sequence is that of Cobalt-precorrin-5B C(1)-methyltransferase from Paramagnetospirillum magneticum (strain ATCC 700264 / AMB-1) (Magnetospirillum magneticum).